The primary structure comprises 101 residues: Small ribosomal subunit protein uS14 (101 aa).

Belongs to the universal ribosomal protein uS14 family. In terms of assembly, part of the 30S ribosomal subunit. Contacts proteins S3 and S10.

Functionally, binds 16S rRNA, required for the assembly of 30S particles and may also be responsible for determining the conformation of the 16S rRNA at the A site. This is Small ribosomal subunit protein uS14 from Brucella anthropi (strain ATCC 49188 / DSM 6882 / CCUG 24695 / JCM 21032 / LMG 3331 / NBRC 15819 / NCTC 12168 / Alc 37) (Ochrobactrum anthropi).